A 438-amino-acid chain; its full sequence is Trigger factor (438 aa).

Residues 160-245 (DDKVTIDFVG…VKKIQQAELP (86 aa)) form the PPIase FKBP-type domain.

Belongs to the FKBP-type PPIase family. Tig subfamily.

The protein localises to the cytoplasm. The catalysed reaction is [protein]-peptidylproline (omega=180) = [protein]-peptidylproline (omega=0). In terms of biological role, involved in protein export. Acts as a chaperone by maintaining the newly synthesized protein in an open conformation. Functions as a peptidyl-prolyl cis-trans isomerase. This Francisella tularensis subsp. holarctica (strain LVS) protein is Trigger factor.